Here is a 188-residue protein sequence, read N- to C-terminus: Adenine phosphoribosyltransferase (188 aa).

It belongs to the purine/pyrimidine phosphoribosyltransferase family. In terms of assembly, homodimer.

It is found in the cytoplasm. The enzyme catalyses AMP + diphosphate = 5-phospho-alpha-D-ribose 1-diphosphate + adenine. Its pathway is purine metabolism; AMP biosynthesis via salvage pathway; AMP from adenine: step 1/1. Its function is as follows. Catalyzes a salvage reaction resulting in the formation of AMP, that is energically less costly than de novo synthesis. This Frankia casuarinae (strain DSM 45818 / CECT 9043 / HFP020203 / CcI3) protein is Adenine phosphoribosyltransferase.